A 1190-amino-acid polypeptide reads, in one-letter code: Wings apart-like protein homolog (1190 aa).

Disordered stretches follow at residues 1 to 23 (MTSR…FDEV) and 46 to 82 (QKRP…DESL). A mediates interaction with the cohesin complex region spans residues 1 to 659 (MTSRFGKTYS…ENQEFTDDIE (659 aa)). Residues 54 to 66 (DIQEIPKKPKVEE) are compositionally biased toward basic and acidic residues. The short motif at 73–75 (FGF) is the FGF motif 1 element. Serine 77 carries the phosphoserine modification. Residue lysine 168 is modified to N6-acetyllysine. Phosphoserine occurs at positions 221, 223, and 226. Residues 260-286 (LLEMKDDDFKNRLENLNEAIEEDIVQS) adopt a coiled-coil conformation. Phosphoserine occurs at positions 347 and 380. Positions 429–431 (FGF) match the FGF motif 2 motif. Residue serine 443 is modified to Phosphoserine. Positions 453–455 (FGF) match the FGF motif 3 motif. Residues serine 459 and serine 461 each carry the phosphoserine modification. Acidic residues predominate over residues 459-469 (SESEDDEDDDC). Residues 459–553 (SESEDDEDDD…SGPKRSPTKA (95 aa)) are disordered. The span at 494–509 (SNDNSQDSQSGTNNAE) shows a compositional bias: polar residues. Residues 531–540 (QGDKSKENTR) are compositionally biased toward basic and acidic residues. The region spanning 626 to 1169 (RREDKELYTV…KKFLSFMNLT (544 aa)) is the WAPL domain. A coiled-coil region spans residues 749–782 (ELEQDASSAKLLNEKDMNKIKEKIRRLCETVHNK). Serine 904 carries the post-translational modification Phosphoserine.

It belongs to the WAPL family. In terms of assembly, interacts with the cohesin complex throughout the cell cycle; interacts with both chromatin-bound and soluble pools of the complex. Interacts with RAD21; the interaction is direct. Interacts with PDS5A; the interaction is direct, cohesin-dependent and competitive with CDCA5/SORORIN. Interacts (via FGF motifs) with PDS5B; the interaction is direct. Interacts with a SMC1 protein (SMC1A or SMC1B) and SMC3. As to quaternary structure, (Microbial infection) Isoform 2 interacts with Epstein-Barr virus EBNA2. In terms of processing, deubiquitinated by USP37; leading to stabilization. In terms of tissue distribution, isoform 1 is highly expressed in uterine cervix tumor. Isoform 2 is widely expressed with a high level in skeletal muscle and heart.

It is found in the nucleus. Its subcellular location is the chromosome. It localises to the cytoplasm. Functionally, regulator of sister chromatid cohesion in mitosis which negatively regulates cohesin association with chromatin. Involved in both sister chromatid cohesion during interphase and sister-chromatid resolution during early stages of mitosis. Couples DNA replication to sister chromatid cohesion. Cohesion ensures that chromosome partitioning is accurate in both meiotic and mitotic cells and plays an important role in DNA repair. The chain is Wings apart-like protein homolog from Homo sapiens (Human).